The sequence spans 313 residues: MALALCRMSHSPLLNLPGPRLDLLDEVHAAIAEAAEFVRAYDPDLVVIFSPDHYNGFFYRAMHPFCIGMYASAVGDYGTHIGALDVPTDLAADCAKAVLGADVDVAVSASMDVDHGTVQPLEKLFGTATARPVIPIFINAIAAPLGPLRRCRALGTAVGTFLSTLDLRVLVIGSGGLSHSPPVPTLHSADPQVRERIVHGQPLTPAQRQARQTVVMEAAKSFAAGNSDLQPLNPAWDQRFLEIIDNGHLSDLDRWSNSFVTHEGGSLAHEIRTWISAFAAMAVAGPYQTKVRYYKQAADLIAGFAIRTAVPIP.

H115 functions as the Proton donor in the catalytic mechanism. The active-site Proton acceptor is the H179.

This sequence belongs to the LigB/MhpB extradiol dioxygenase family. In terms of assembly, homotetramer. Fe(2+) is required as a cofactor.

It catalyses the reaction 3-(2,3-dihydroxyphenyl)propanoate + O2 = (2Z,4E)-2-hydroxy-6-oxonona-2,4-dienedioate + H(+). The enzyme catalyses (2E)-3-(2,3-dihydroxyphenyl)prop-2-enoate + O2 = (2Z,4E,7E)-2-hydroxy-6-oxonona-2,4,7-trienedioate + H(+). It functions in the pathway aromatic compound metabolism; 3-phenylpropanoate degradation. Functionally, catalyzes the non-heme iron(II)-dependent oxidative cleavage of 2,3-dihydroxyphenylpropionic acid and 2,3-dihydroxicinnamic acid into 2-hydroxy-6-ketononadienedioate and 2-hydroxy-6-ketononatrienedioate, respectively. The polypeptide is 2,3-dihydroxyphenylpropionate/2,3-dihydroxicinnamic acid 1,2-dioxygenase (Mycobacterium ulcerans (strain Agy99)).